Consider the following 500-residue polypeptide: Beta-glucosidase 28 (500 aa).

The first 24 residues, 1–24, serve as a signal peptide directing secretion; that stretch reads MDRRLLLSALLFIALACSSNRVHG. Q45 provides a ligand contact to a beta-D-glucoside. N111 carries N-linked (GlcNAc...) asparagine glycosylation. Residues H146 and 191-192 contribute to the a beta-D-glucoside site; that span reads NE. E192 serves as the catalytic Proton donor. An intrachain disulfide couples C211 to C219. Y337 is a binding site for a beta-D-glucoside. N-linked (GlcNAc...) asparagine glycosylation occurs at N362. Residue E408 coordinates a beta-D-glucoside. The active-site Nucleophile is E408. 3 N-linked (GlcNAc...) asparagine glycosylation sites follow: N409, N415, and N416. Residues W457, 464–465, and F473 contribute to the a beta-D-glucoside site; that span reads EF.

Belongs to the glycosyl hydrolase 1 family.

The catalysed reaction is Hydrolysis of terminal, non-reducing beta-D-glucosyl residues with release of beta-D-glucose.. The chain is Beta-glucosidase 28 (BGLU28) from Oryza sativa subsp. japonica (Rice).